A 141-amino-acid chain; its full sequence is Large ribosomal subunit protein uL11 (141 aa).

It belongs to the universal ribosomal protein uL11 family. In terms of assembly, part of the ribosomal stalk of the 50S ribosomal subunit. Interacts with L10 and the large rRNA to form the base of the stalk. L10 forms an elongated spine to which L12 dimers bind in a sequential fashion forming a multimeric L10(L12)X complex. One or more lysine residues are methylated.

Functionally, forms part of the ribosomal stalk which helps the ribosome interact with GTP-bound translation factors. The protein is Large ribosomal subunit protein uL11 of Synechococcus sp. (strain JA-3-3Ab) (Cyanobacteria bacterium Yellowstone A-Prime).